Here is a 212-residue protein sequence, read N- to C-terminus: ER lumen protein-retaining receptor 1 (212 aa).

At 1–4 the chain is on the lumenal side; that stretch reads MNLF. Residues 5-24 form a helical membrane-spanning segment; sequence RFLGDLSHLLAIILLLLKIW. Topologically, residues 25–32 are cytoplasmic; that stretch reads KSRSCAGI. Residues 33–52 form a helical membrane-spanning segment; it reads SGKSQVLFAVVFTARYLDLF. Residues 47 to 48 form an interaction with the K-D-E-L motif on target proteins region; sequence RY. Over 53–58 the chain is Lumenal; sequence TNYISL. The helical transmembrane segment at 59-79 threads the bilayer; that stretch reads YNTCMKVVYIACSFTTVWMIY. Topologically, residues 80-92 are cytoplasmic; sequence SKFKATYDGNHDT. Residues 93–110 form a helical membrane-spanning segment; sequence FRVEFLVVPTAVLAFLVN. The Lumenal segment spans residues 111–116; it reads HDFTPL. The chain crosses the membrane as a helical span at residues 117–135; that stretch reads EILWTFSIYLESVAILPQL. Residues 136-149 are Cytoplasmic-facing; it reads FMVSKTGEAETITS. Residues 150-168 traverse the membrane as a helical segment; it reads HYLFALGVYRTLYLFNWIW. The tract at residues 159-169 is interaction with the K-D-E-L motif on target proteins; sequence RTLYLFNWIWR. Topologically, residues 169–178 are lumenal; that stretch reads RYHFEGFFDL. The chain crosses the membrane as a helical span at residues 179–199; it reads IAIVAGLVQTVLYCDFFYLYI. Topologically, residues 200 to 212 are cytoplasmic; the sequence is TKVLKGKKLSLPA. Residues 204–207 form an important for recycling of cargo proteins with the sequence motif K-D-E-L from the Golgi to the endoplasmic reticulum region; the sequence is KGKK. S209 is subject to Phosphoserine; by PKA.

The protein belongs to the ERD2 family. As to quaternary structure, upon ligand binding the receptor oligomerizes and interacts with components of the transport machinery such as ARFGAP1 and ARF1. Post-translationally, phosphorylation by PKA at Ser-209 is required for endoplasmic reticulum retention function.

Its subcellular location is the golgi apparatus membrane. It localises to the cytoplasmic vesicle. It is found in the COPI-coated vesicle membrane. The protein localises to the endoplasmic reticulum membrane. The protein resides in the endoplasmic reticulum-Golgi intermediate compartment membrane. Receptor for the C-terminal sequence motif K-D-E-L that is present on endoplasmic reticulum resident proteins and that mediates their recycling from the Golgi back to the endoplasmic reticulum. This is ER lumen protein-retaining receptor 1 (Kdelr1) from Rattus norvegicus (Rat).